We begin with the raw amino-acid sequence, 333 residues long: Photosystem II assembly lipoprotein Ycf48 (333 aa).

The N-terminal stretch at 1–23 (MTRFVSSAINLLLVLVLGVSLSG) is a signal peptide. Cys24 carries the N-palmitoyl cysteine lipid modification. Residue Cys24 is the site of S-diacylglycerol cysteine attachment.

The protein belongs to the Ycf48 family. In terms of assembly, part of early PSII assembly complexes which includes D1 (psbA) and PsbI; not found in mature PSII. Binds to the lumenal side of PSII complexes. Interacts with YidC.

The protein resides in the cellular thylakoid membrane. A factor required for optimal assembly of photosystem II (PSII), acting in the early stages of PSII assembly. Also plays a role in replacement of photodamaged D1 (psbA). Assists YidC in synthesis of chlorophyll-binding proteins. The polypeptide is Photosystem II assembly lipoprotein Ycf48 (Parasynechococcus marenigrum (strain WH8102)).